We begin with the raw amino-acid sequence, 138 residues long: Holo-[acyl-carrier-protein] synthase (138 aa).

Asp-8 and Glu-56 together coordinate Mg(2+).

It belongs to the P-Pant transferase superfamily. AcpS family. Mg(2+) serves as cofactor.

The protein localises to the cytoplasm. It carries out the reaction apo-[ACP] + CoA = holo-[ACP] + adenosine 3',5'-bisphosphate + H(+). Its function is as follows. Transfers the 4'-phosphopantetheine moiety from coenzyme A to a Ser of acyl-carrier-protein. The protein is Holo-[acyl-carrier-protein] synthase of Clostridium novyi (strain NT).